The primary structure comprises 260 residues: DNA repair protein RecO (260 aa).

This sequence belongs to the RecO family.

Its function is as follows. Involved in DNA repair and RecF pathway recombination. This Streptococcus gordonii (strain Challis / ATCC 35105 / BCRC 15272 / CH1 / DL1 / V288) protein is DNA repair protein RecO.